A 444-amino-acid polypeptide reads, in one-letter code: Protein phosphatase 2C homolog C10F6.17c (444 aa).

The PPM-type phosphatase domain maps to 85-439 (RYDFNQVASN…DDITVTVIFF (355 aa)). The Mn(2+) site is built by Asp121, Gly122, and Asp344.

Belongs to the PP2C family. Mg(2+) serves as cofactor. The cofactor is Mn(2+).

The protein localises to the mitochondrion. The enzyme catalyses O-phospho-L-seryl-[protein] + H2O = L-seryl-[protein] + phosphate. It carries out the reaction O-phospho-L-threonyl-[protein] + H2O = L-threonyl-[protein] + phosphate. Involved in regulation of pyruvate dehydrogenase activity. The sequence is that of Protein phosphatase 2C homolog C10F6.17c from Schizosaccharomyces pombe (strain 972 / ATCC 24843) (Fission yeast).